A 118-amino-acid chain; its full sequence is Holo-[acyl-carrier-protein] synthase (118 aa).

The Mg(2+) site is built by Asp-8 and Glu-58.

Belongs to the P-Pant transferase superfamily. AcpS family. Requires Mg(2+) as cofactor.

It is found in the cytoplasm. It carries out the reaction apo-[ACP] + CoA = holo-[ACP] + adenosine 3',5'-bisphosphate + H(+). In terms of biological role, transfers the 4'-phosphopantetheine moiety from coenzyme A to a Ser of acyl-carrier-protein. This Listeria welshimeri serovar 6b (strain ATCC 35897 / DSM 20650 / CCUG 15529 / CIP 8149 / NCTC 11857 / SLCC 5334 / V8) protein is Holo-[acyl-carrier-protein] synthase.